Consider the following 554-residue polypeptide: RecBCD enzyme subunit RecD (554 aa).

Residue 155-162 (GGPGTGKT) coordinates ATP.

The protein belongs to the RecD family. As to quaternary structure, heterotrimer of RecB, RecC and RecD. All subunits contribute to DNA-binding.

It catalyses the reaction Couples ATP hydrolysis with the unwinding of duplex DNA at the replication fork by translocating in the 5'-3' direction. This creates two antiparallel DNA single strands (ssDNA). The leading ssDNA polymer is the template for DNA polymerase III holoenzyme which synthesizes a continuous strand.. The enzyme catalyses ATP + H2O = ADP + phosphate + H(+). A helicase/nuclease that prepares dsDNA breaks (DSB) for recombinational DNA repair. Binds to DSBs and unwinds DNA via a highly rapid and processive ATP-dependent bidirectional helicase activity. Holoenzyme degrades any linearized DNA that is unable to undergo homologous recombination. In the holoenzyme this subunit has ssDNA-dependent ATPase and 5'-3' helicase activity. When added to pre-assembled RecBC greatly stimulates nuclease activity and augments holoenzyme processivity. Unlike the case in E.coli, suppresses RecA-dependent homologous recombination, is instead required for single-strand annealing pathway repair of DSB. The chain is RecBCD enzyme subunit RecD from Mycolicibacterium smegmatis (strain ATCC 700084 / mc(2)155) (Mycobacterium smegmatis).